The following is a 253-amino-acid chain: Flap endonuclease Xni (253 aa).

Residue aspartate 104 coordinates Mg(2+). Residues 160–250 (VAPQQLTDFW…HGNLQQLRLN (91 aa)) form the 5'-3' exonuclease domain. K(+)-binding residues include leucine 171, alanine 172, proline 180, isoleucine 182, and isoleucine 185. An interaction with DNA region spans residues 184-189 (GIGAKT).

The protein belongs to the Xni family. Mg(2+) serves as cofactor. The cofactor is K(+).

Functionally, has flap endonuclease activity. During DNA replication, flap endonucleases cleave the 5'-overhanging flap structure that is generated by displacement synthesis when DNA polymerase encounters the 5'-end of a downstream Okazaki fragment. The protein is Flap endonuclease Xni of Edwardsiella ictaluri (strain 93-146).